The primary structure comprises 203 residues: EF-hand calcium-binding domain-containing protein 8 (203 aa).

The segment at 61–107 is disordered; it reads SSEKPGESPKPQKMAQPGGSQKKETSRSVPVTDPTSHNSEINQRDQQ. Positions 87-107 are enriched in polar residues; sequence RSVPVTDPTSHNSEINQRDQQ. 2 consecutive EF-hand domains span residues 111–145 and 146–181; these read MHLADLQKVFEKEADENGALKKEGFIRIMKGVLSS and MSEEMLELLFLKVDSDCNGFVTWQKYVDYMMREFQG.

This Mus musculus (Mouse) protein is EF-hand calcium-binding domain-containing protein 8 (Efcab8).